The sequence spans 1161 residues: MTLEIVRGFADRDFRSELLERIYEKYRIDPQARFFYIVPNHIKFSAEVDVLKKFGSLLGKNDQEAQAFSRLQVYSLSRLAWALTKERDQKTIISNQSVSILVGQVLRELPIEKLNIFARSARMPGFVANVAEQLLEIWRSGLTASEILPLHQFDDRLSEKIKVLALIETKILPSLKDYSLPDDALRNFATQISKIDLKNCNFYFEGFSGFTASELSLVKALISADRKTQLGKKSEIVFSLTGEQQSDQYGEGNLFYRANQLFKNEFSSARVWIVSNIRPLSESQLNFEQSWRELETQGFTSQKRSFPQTKIVVSSDQEHEIDFVARSIRQRLVDNPKLRAKDILVLAQRLDGYKNIIPKIFDRYDLPYFLDKDTRMSDHPLASLAENLLGSSNEFAYERIMKIFRTGLLSWQLEDNFQTALDYLENYLLANNPKEKNWRQEEFQLIQISDEQDLNDDHKIDRQINALINRMRLFIIKILDDFQEKFAKVENYHQAVKTLYNWLTDQQVDQVLLNQANDGDDRGQQTWKLLLSTLDEVDQLIGDKKYSQKDFLQILKDGFAAASFSGIPASLDQITVSESGIVQRNDFKALYFIDASDASLPAQTNSSSLIDDFDRLQLIDDFSKAQKPYYLQDTSRQEMTAENFRFYSSVLSATDSVTFSYSKLRLDGKQNELSPYLRRLSLKNVSDLKIEKIPDLPQSQADLVDYLGTANSSAAILSQTAQNFGEDFIDGLTDLLIKRNPYFQRILQALHYNNQPVTLRPELIKKLFGEDLRLSISQIEKYYSNPYEYFLQYGLRLKKRNQFTVDAALSGTYYHSIFEQVINRLIGKRTDFHDLSDQELKKLSQESAQNLIELPDFQILQSDDHFRAVARSLTDDVLLTLKLMHRANRLNNSRPIKTEAVFGKLSSDQQREQSLSGLDFTLANGRKIYLRGKVDRIDQQDLEHIFGTIIDYKSNGKVFDFRDAYVGTELQLLTYWLALSKNSSRIGINQPGGAVFVQIRNKPADISQALAHQIQLDQLIGDRAKQQVPDFQFHGILLDDQNYLANLQTVLAGQKAKYYNFGLTKKGQKTARSDLVSKEDLTVLLKHDEKKLVEAGNKIIHGEFPLYPIKKNEQRSALTYSDYTEIMNFDRNFGNQYNNLTRYPKNKSELISKMREEEGEN.

The protein belongs to the helicase family. AddB/RexB type 2 subfamily. Heterodimer of AddA and RexB. The cofactor is Mg(2+).

Its function is as follows. The heterodimer acts as both an ATP-dependent DNA helicase and an ATP-dependent, dual-direction single-stranded exonuclease. Recognizes the chi site generating a DNA molecule suitable for the initiation of homologous recombination. This subunit has 5' -&gt; 3' nuclease activity but not helicase activity. In Oenococcus oeni (strain ATCC BAA-331 / PSU-1), this protein is ATP-dependent helicase/deoxyribonuclease subunit B.